The sequence spans 338 residues: tRNA-specific 2-thiouridylase MnmA (338 aa).

Residues 6-13 (AMSGGVDS) and methionine 32 contribute to the ATP site. The active-site Nucleophile is cysteine 92. The cysteines at positions 92 and 186 are disulfide-linked. Glycine 116 serves as a coordination point for ATP. Positions 134-136 (KDQ) are interaction with tRNA. Cysteine 186 acts as the Cysteine persulfide intermediate in catalysis. The segment at 288–289 (RY) is interaction with tRNA.

The protein belongs to the MnmA/TRMU family.

Its subcellular location is the cytoplasm. It catalyses the reaction S-sulfanyl-L-cysteinyl-[protein] + uridine(34) in tRNA + AH2 + ATP = 2-thiouridine(34) in tRNA + L-cysteinyl-[protein] + A + AMP + diphosphate + H(+). Catalyzes the 2-thiolation of uridine at the wobble position (U34) of tRNA, leading to the formation of s(2)U34. In Campylobacter jejuni subsp. jejuni serotype O:6 (strain 81116 / NCTC 11828), this protein is tRNA-specific 2-thiouridylase MnmA.